Consider the following 145-residue polypeptide: Large ribosomal subunit protein uL15 (145 aa).

Positions 1–57 (MKLNDLSPAPGSRREKHRPGRGIGSGLGKTGGRGHKGQTSRSGGTIAPGFEGGQQPL) are disordered. A compositionally biased stretch (gly residues) spans 21 to 31 (RGIGSGLGKTG).

The protein belongs to the universal ribosomal protein uL15 family. Part of the 50S ribosomal subunit.

Binds to the 23S rRNA. In Pseudomonas fluorescens (strain SBW25), this protein is Large ribosomal subunit protein uL15.